The following is a 111-amino-acid chain: Large ribosomal subunit protein uL22 (111 aa).

It belongs to the universal ribosomal protein uL22 family. In terms of assembly, part of the 50S ribosomal subunit.

This protein binds specifically to 23S rRNA; its binding is stimulated by other ribosomal proteins, e.g. L4, L17, and L20. It is important during the early stages of 50S assembly. It makes multiple contacts with different domains of the 23S rRNA in the assembled 50S subunit and ribosome. Its function is as follows. The globular domain of the protein is located near the polypeptide exit tunnel on the outside of the subunit, while an extended beta-hairpin is found that lines the wall of the exit tunnel in the center of the 70S ribosome. In Francisella tularensis subsp. tularensis (strain FSC 198), this protein is Large ribosomal subunit protein uL22.